We begin with the raw amino-acid sequence, 169 residues long: Cuticle protein 21 (169 aa).

A run of 6 repeats spans residues 21 to 24, 27 to 30, 33 to 36, 39 to 42, 47 to 50, and 53 to 56. Residues 65-135 form the Chitin-binding type R&amp;R domain; sequence NPQYSYAYNV…KEAGAHPAPV (71 aa). Tandem repeats lie at residues 140-143, 146-149, and 160-163.

Its function is as follows. Component of the cuticle of migratory locust which contains more than 100 different structural proteins. This is Cuticle protein 21 (ACP21) from Locusta migratoria (Migratory locust).